The chain runs to 147 residues: Ribonuclease 4 (147 aa).

A signal peptide spans Met1 to Gly28. Gln29 bears the Pyrrolidone carboxylic acid mark. DUMP is bound by residues Arg35, His40, Lys68, Asn71, and Thr72. His40 serves as the catalytic Proton acceptor. 4 disulfides stabilise this stretch: Cys53–Cys109, Cys67–Cys120, Cys85–Cys135, and Cys92–Cys99. His144 serves as the catalytic Proton donor. Phe145 contacts dUMP.

The protein belongs to the pancreatic ribonuclease family.

It localises to the secreted. Functionally, cleaves preferentially after uridine bases. Has antimicrobial activity against uropathogenic E.coli (UPEC). Probably contributes to urinary tract sterility. The polypeptide is Ribonuclease 4 (RNASE4) (Bos taurus (Bovine)).